Here is a 204-residue protein sequence, read N- to C-terminus: Guanylate kinase (204 aa).

Residues 5–184 form the Guanylate kinase-like domain; that stretch reads GLLIVLSGPS…AVQRIKDIIA (180 aa). 12 to 19 is an ATP binding site; the sequence is GPSGVGKG.

This sequence belongs to the guanylate kinase family.

It localises to the cytoplasm. The catalysed reaction is GMP + ATP = GDP + ADP. Essential for recycling GMP and indirectly, cGMP. The polypeptide is Guanylate kinase (Enterococcus faecalis (strain ATCC 700802 / V583)).